Consider the following 317-residue polypeptide: WSCD family member CG9164 (317 aa).

A helical membrane pass occupies residues phenylalanine 8 to asparagine 28. N-linked (GlcNAc...) asparagine glycans are attached at residues asparagine 151, asparagine 227, and asparagine 233.

This sequence belongs to the WSCD family.

It is found in the membrane. This is WSCD family member CG9164 from Drosophila melanogaster (Fruit fly).